Reading from the N-terminus, the 455-residue chain is MAADSQDIYRNLSADDYEAAPIVVDSVCPVCEEDGETRIMCTSIPYYRAVILMSFECPHCGHKNNEIQSGEAVQEHGTLIVLRVQKPEDLRRQLVKSEYASIEVPELQLEIPHKSQPGEVTTVEGVLERVHRGLSQDQEKRRLLDPEGASQIDAYLQKITSCMELGETWTLRLRDPTGNCYIQNPDVRHVDPRCIISHYHRNLDERKLLALADDNEEEEEVEPSAAAPEFKSYEDAKQEVLHFATDCPNCHGPTEVKMKPTDIPFFQTVIIMSLACDRCGYKSNEVKSGGAIRDQGCRMSVKLEKDLDLARDVLKTDTCALSIPEIDLEVGGNALCGRFTTIEGLLTATKEQLDAQSSFFMGDSAQTGEKSAVTTFLEKLDDIIALRLPATIILDDPTGCSYVQSLTAPMDDPRLTKEFYTRTYEQNDELGINDMKVENYGELDALAEEDEPHEA.

2 consecutive C4-type zinc fingers follow at residues 28–60 (CPVC…CPHC) and 247–279 (CPNC…CDRC).

It belongs to the ZPR1 family.

It is found in the nucleus. The polypeptide is Zinc finger protein ZPR1 homolog (Caenorhabditis elegans).